Reading from the N-terminus, the 374-residue chain is Pectate lyase 2 (374 aa).

Residues 1–22 form the signal peptide; that stretch reads MKYLLPTAAAGLLLLAAQPAMA. The cysteines at positions 93 and 176 are disulfide-linked. D150, D152, E187, and D191 together coordinate Ca(2+). The active site involves R239. The cysteines at positions 350 and 373 are disulfide-linked.

The protein belongs to the polysaccharide lyase 1 family. PLADES subfamily. Requires Ca(2+) as cofactor.

It is found in the secreted. The catalysed reaction is Eliminative cleavage of (1-&gt;4)-alpha-D-galacturonan to give oligosaccharides with 4-deoxy-alpha-D-galact-4-enuronosyl groups at their non-reducing ends.. It participates in glycan metabolism; pectin degradation; 2-dehydro-3-deoxy-D-gluconate from pectin: step 2/5. Functionally, involved in maceration and soft-rotting of plant tissue. This Pectobacterium carotovorum (Erwinia carotovora) protein is Pectate lyase 2 (pel2).